An 82-amino-acid polypeptide reads, in one-letter code: Small ribosomal subunit protein uS17 (82 aa).

It belongs to the universal ribosomal protein uS17 family. As to quaternary structure, part of the 30S ribosomal subunit.

Its function is as follows. One of the primary rRNA binding proteins, it binds specifically to the 5'-end of 16S ribosomal RNA. The polypeptide is Small ribosomal subunit protein uS17 (Rhodopseudomonas palustris (strain BisA53)).